The following is a 597-amino-acid chain: Medium/long-chain-fatty-acid--CoA ligase FadD6 (597 aa).

The protein belongs to the ATP-dependent AMP-binding enzyme family.

It catalyses the reaction a medium-chain fatty acid + ATP + CoA = a medium-chain fatty acyl-CoA + AMP + diphosphate. The enzyme catalyses a long-chain fatty acid + ATP + CoA = a long-chain fatty acyl-CoA + AMP + diphosphate. It carries out the reaction hexanoate + ATP + CoA = hexanoyl-CoA + AMP + diphosphate. The catalysed reaction is octanoate + ATP + CoA = octanoyl-CoA + AMP + diphosphate. It catalyses the reaction decanoate + ATP + CoA = decanoyl-CoA + AMP + diphosphate. The enzyme catalyses dodecanoate + ATP + CoA = dodecanoyl-CoA + AMP + diphosphate. It carries out the reaction tetradecanoate + ATP + CoA = tetradecanoyl-CoA + AMP + diphosphate. The catalysed reaction is hexadecanoate + ATP + CoA = hexadecanoyl-CoA + AMP + diphosphate. It catalyses the reaction octadecanoate + ATP + CoA = octadecanoyl-CoA + AMP + diphosphate. The enzyme catalyses 9-decenoate + ATP + CoA = 9-decenoyl-CoA + AMP + diphosphate. It carries out the reaction (9Z)-octadecenoate + ATP + CoA = (9Z)-octadecenoyl-CoA + AMP + diphosphate. The catalysed reaction is 2-hydroxyhexadecanoate + ATP + CoA = 2-hydroxyhexadecanoyl-CoA + AMP + diphosphate. It catalyses the reaction 3-hydroxytetradecanoate + ATP + CoA = 3-hydroxytetradecanoyl-CoA + AMP + diphosphate. The enzyme catalyses 12-hydroxyoctadecanoate + ATP + CoA = 12-hydroxyoctadecanoyl-CoA + AMP + diphosphate. It carries out the reaction 15-hydroxypentadecanoate + ATP + CoA = 15-hydroxypentadecanoyl-CoA + AMP + diphosphate. The catalysed reaction is 16-hydroxyhexadecanoate + ATP + CoA = 16-hydroxyhexadecanoyl-CoA + AMP + diphosphate. It catalyses the reaction 2-methylhexadecanoate + ATP + CoA = 2-methylhexadecanoyl-CoA + AMP + diphosphate. The enzyme catalyses 3-methylundecanoate + ATP + CoA = 3-methylundecanoyl-CoA + AMP + diphosphate. It carries out the reaction 12-methyltridecanoate + ATP + CoA = 12-methyltridecanoyl-CoA + AMP + diphosphate. The catalysed reaction is 12-methyloctadecanoate + ATP + CoA = 12-methyloctadecanoyl-CoA + AMP + diphosphate. In terms of biological role, catalyzes the activation of medium/long-chain fatty acids as acyl-coenzyme A (acyl-CoA). May play a role in the uptake of fatty acids by trapping them metabolically as CoA esters. May also play an important role in the channeling of fatty acids into triacylglycerol (TAG) for use by Mycobacterium during its dormancy. This Mycobacterium tuberculosis (strain ATCC 25618 / H37Rv) protein is Medium/long-chain-fatty-acid--CoA ligase FadD6.